The following is a 440-amino-acid chain: Aspartokinase (440 aa).

It belongs to the aspartokinase family.

It carries out the reaction L-aspartate + ATP = 4-phospho-L-aspartate + ADP. The protein operates within amino-acid biosynthesis; L-lysine biosynthesis via DAP pathway; (S)-tetrahydrodipicolinate from L-aspartate: step 1/4. Its pathway is amino-acid biosynthesis; L-methionine biosynthesis via de novo pathway; L-homoserine from L-aspartate: step 1/3. It functions in the pathway amino-acid biosynthesis; L-threonine biosynthesis; L-threonine from L-aspartate: step 1/5. This Chlamydia pneumoniae (Chlamydophila pneumoniae) protein is Aspartokinase (lysC).